The primary structure comprises 435 residues: MKEELSKVSSMQNFEMIQRERLPTLYEVLIQRTSQPVDLWTFYTFLSQFPYAINYLDFWVDLMTHTRLCKNYIELVRKSLINFPQEQQQNGSTSTATFDLLNALIEEGHLDPEAPDKLLENSGPDVPFSPKLNELLGDWKHQSGIGQEALRNEDVALIVDEIMKRRSQQDGKPQITTKQLLHSAVGLCNTYLVSPEQSERYLSNIPMETRNRIIESVQIERKYDIEIFDDLKNLTYQFLEMDCFPKFLSRVALHNIHDEISDWRFHSVGVTNEKSNRSRGQTHISRSPFSNHTSISRIGFGLLWLGIGFWIGYVLIFLAYSRAIRVVTVVPFTLGCYCIVCGMYQVDIVYSWFGVTQRLLHRHKNAGNDEGDASSDTDHVPMILAVFGGRRRLTRIEHPFTRQLLRKRGLWCLLLVVGATAAFTVIFSCVPGRRV.

Topologically, residues 1 to 297 are cytoplasmic; sequence MKEELSKVSS…PFSNHTSISR (297 aa). Residues 159 to 248 enclose the RGS domain; it reads VDEIMKRRSQ…LEMDCFPKFL (90 aa). At S167 the chain carries Phosphoserine. The chain crosses the membrane as a helical span at residues 298–318; the sequence is IGFGLLWLGIGFWIGYVLIFL. Over 319–325 the chain is Extracellular; sequence AYSRAIR. The chain crosses the membrane as a helical span at residues 326 to 346; the sequence is VVTVVPFTLGCYCIVCGMYQV. At 347 to 409 the chain is on the cytoplasmic side; it reads DIVYSWFGVT…FTRQLLRKRG (63 aa). The chain crosses the membrane as a helical span at residues 410-430; it reads LWCLLLVVGATAAFTVIFSCV. The Extracellular segment spans residues 431 to 435; sequence PGRRV.

Forms an heterodimeric complex with RAX2. Also interacts with BUD8 and BUD9.

Its subcellular location is the cell membrane. It is found in the bud neck. The protein localises to the bud tip. Required for the establishment of the bipolar budding pattern. Involved in selecting bud sites at both the distal and proximal poles of daughter cells as well as near previously used division sites on mother cells. The RAX1-RAX2 complex performs the asymmetric localization of the two cortical landmarks, BUD8 and BUD9, at the distal and proximal poles, respectively. This Saccharomyces cerevisiae (strain ATCC 204508 / S288c) (Baker's yeast) protein is Bud site selection protein RAX1.